Reading from the N-terminus, the 531-residue chain is Doublesex- and mab-3-related transcription factor A2 (531 aa).

The segment at residues 69-116 (CARCRNHGVVSALKGHKRYCRWKDCLCAKCTLIAERQRVMAAQVALRR) is a DNA-binding region (DM). Residues 197-312 (LQAGRPDSPQ…GGPGPRQRTP (116 aa)) form a disordered region. A compositionally biased stretch (low complexity) spans 274-285 (PGSSSPLGSESG). Positions 310–345 (RTPLDILTRVFPGHRRGVLELVLQGCGGDVVQAIEQ) constitute a DMA domain.

It belongs to the DMRT family. In terms of tissue distribution, expressed in adult brain and testis, as well as in embryonic ovary, kidney, heart, lung, stomach and brain.

It localises to the nucleus. Its function is as follows. May be involved in sexual development. The polypeptide is Doublesex- and mab-3-related transcription factor A2 (Dmrta2) (Mus musculus (Mouse)).